The sequence spans 329 residues: MIVSDGPAERRQGALRVGTRGSPLAVAQTQAVSAAVARATGFDIELVTVTTHGDTSRESLSELGGTGVFATALRDALRNGECDLVVHSLKDLPTAPAPGLVLGAVPKRADARDTLCARDGLRFGELPEGASVGTGSPRRAAQLRAQRPGLDIVDIRGNVDTRLSRVSAGDLDAVVLAAAGLGRLGRLDAATDFFSLSTMPTAPGQGALALEVREGDERGRGPIARALAAVDHATTCAATTAERAVLAGLEAGCAAPVGATAMIDDGLLFLTATVYRPDGAAQLTASHAATPDSFGAAHLDEAARDVGERVVAELLASGAADLAPLKGLR.

Position 253 is an S-(dipyrrolylmethanemethyl)cysteine (Cys-253).

The protein belongs to the HMBS family. Monomer. The cofactor is dipyrromethane.

It carries out the reaction 4 porphobilinogen + H2O = hydroxymethylbilane + 4 NH4(+). Its function is as follows. Tetrapolymerization of the monopyrrole PBG into the hydroxymethylbilane pre-uroporphyrinogen in several discrete steps. The chain is Porphobilinogen deaminase from Leifsonia xyli subsp. xyli (strain CTCB07).